Reading from the N-terminus, the 295-residue chain is 4-diphosphocytidyl-2-C-methyl-D-erythritol kinase (295 aa).

Lys-10 is an active-site residue. 97 to 107 (PIGSGLGGASS) contacts ATP. Asp-139 is an active-site residue.

The protein belongs to the GHMP kinase family. IspE subfamily. In terms of assembly, homodimer.

It catalyses the reaction 4-CDP-2-C-methyl-D-erythritol + ATP = 4-CDP-2-C-methyl-D-erythritol 2-phosphate + ADP + H(+). The protein operates within isoprenoid biosynthesis; isopentenyl diphosphate biosynthesis via DXP pathway; isopentenyl diphosphate from 1-deoxy-D-xylulose 5-phosphate: step 3/6. Functionally, catalyzes the phosphorylation of the position 2 hydroxy group of 4-diphosphocytidyl-2C-methyl-D-erythritol. The polypeptide is 4-diphosphocytidyl-2-C-methyl-D-erythritol kinase (Blochmanniella pennsylvanica (strain BPEN)).